A 469-amino-acid chain; its full sequence is Probable lysophospholipase BODYGUARD 1 (469 aa).

Residues 1-45 form the signal peptide; sequence MGFSRSLNRTVGVFVFFILDIVDFLLCFTYKTLDFFFESEWKPCY. The N-palmitoyl cysteine moiety is linked to residue C46. One can recognise an AB hydrolase-1 domain in the interval 185-439; it reads VVFIHGFLSS…IHVVPDKDHI (255 aa). Residue H189 is part of the active site. Residue S263 is the Nucleophile of the active site. Active-site charge relay system residues include D410 and H438.

In terms of tissue distribution, expressed exclusively in protodermal and epidermal cells of all organs, especially on adaxial sides.

It localises to the cell membrane. Its subcellular location is the secreted. The protein resides in the cell wall. Controls cuticle development and morphogenesis, by promoting cutin and suberin monomers loading. Involved in the regulation of abscissic acid (ABA) biosynthesis in response to osmotic stress. Plays an important role in osmotic stress and drought resistance. Required to ensure a reduced permeability of aerial tissue, thus preventing transpiration. Regulates lateral root hair development. Functionally, required for infection by the pathogenic necrotrophic fungus Botrytis cinerea, probably by regulating structural traits of the cuticle. The chain is Probable lysophospholipase BODYGUARD 1 from Arabidopsis thaliana (Mouse-ear cress).